Here is a 98-residue protein sequence, read N- to C-terminus: MNAERLMMVLREPHTSEKATVMADKFKQFTFKVLKNATKTEIKLAVEHIFNVKVKSVSVVNVKGKSKRFKQTSGKRSDWKKAFVSLHADQDIDFTVTE.

The protein belongs to the universal ribosomal protein uL23 family. Part of the 50S ribosomal subunit. Contacts protein L29, and trigger factor when it is bound to the ribosome.

One of the early assembly proteins it binds 23S rRNA. One of the proteins that surrounds the polypeptide exit tunnel on the outside of the ribosome. Forms the main docking site for trigger factor binding to the ribosome. The chain is Large ribosomal subunit protein uL23 from Legionella pneumophila (strain Paris).